The following is a 226-amino-acid chain: PKHD-type hydroxylase Plav_0377 (226 aa).

One can recognise a Fe2OG dioxygenase domain in the interval lysine 78 to serine 178. 3 residues coordinate Fe cation: histidine 96, aspartate 98, and histidine 159. Arginine 169 contacts 2-oxoglutarate.

It depends on Fe(2+) as a cofactor. The cofactor is L-ascorbate.

The polypeptide is PKHD-type hydroxylase Plav_0377 (Parvibaculum lavamentivorans (strain DS-1 / DSM 13023 / NCIMB 13966)).